The primary structure comprises 532 residues: Flavin-containing monooxygenase 3 (532 aa).

Residues 9 to 13, Glu32, 40 to 41, and 61 to 62 contribute to the FAD site; these read GAGVS, LW, and NS. NADP(+)-binding positions include 60 to 61 and 195 to 198; these read SN and SGCD. The residue at position 401 (Ser401) is a Phosphoserine. The helical transmembrane segment at 510 to 530 threads the bilayer; sequence FFFHWLKLFAIPILLIAVFLV.

Belongs to the FMO family. FAD serves as cofactor.

Its subcellular location is the microsome membrane. The protein resides in the endoplasmic reticulum membrane. The catalysed reaction is trimethylamine + NADPH + O2 = trimethylamine N-oxide + NADP(+) + H2O. It carries out the reaction N,N-dimethylaniline + NADPH + O2 + H(+) = N,N-dimethylaniline N-oxide + NADP(+) + H2O. It catalyses the reaction hypotaurine + NADPH + O2 + H(+) = taurine + NADP(+) + H2O. The enzyme catalyses (S)-nicotine + NADPH + O2 = trans-(S)-nicotine N(1')-oxide + NADP(+) + H2O. The catalysed reaction is albendazole + NADPH + O2 + H(+) = albendazole S-oxide + NADP(+) + H2O. In terms of biological role, essential hepatic enzyme that catalyzes the oxygenation of a wide variety of nitrogen- and sulfur-containing compounds including drugs as well as dietary compounds. Plays an important role in the metabolism of trimethylamine (TMA), via the production of trimethylamine N-oxide (TMAO) metabolite. TMA is generated by the action of gut microbiota using dietary precursors such as choline, choline containing compounds, betaine or L-carnitine. By regulating TMAO concentration, FMO3 directly impacts both platelet responsiveness and rate of thrombus formation. The chain is Flavin-containing monooxygenase 3 (FMO3) from Pan troglodytes (Chimpanzee).